The following is a 273-amino-acid chain: Rhamnulose-1-phosphate aldolase (273 aa).

Glutamate 117 is a catalytic residue. Zn(2+) contacts are provided by histidine 140, histidine 142, and histidine 211.

This sequence belongs to the aldolase class II family. RhaD subfamily. Zn(2+) is required as a cofactor.

The protein localises to the cytoplasm. The catalysed reaction is L-rhamnulose 1-phosphate = (S)-lactaldehyde + dihydroxyacetone phosphate. It participates in carbohydrate degradation; L-rhamnose degradation; glycerone phosphate from L-rhamnose: step 3/3. In terms of biological role, catalyzes the reversible cleavage of L-rhamnulose-1-phosphate to dihydroxyacetone phosphate (DHAP) and L-lactaldehyde. The polypeptide is Rhamnulose-1-phosphate aldolase (Listeria monocytogenes serotype 4b (strain F2365)).